Here is a 469-residue protein sequence, read N- to C-terminus: CBL-interacting serine/threonine-protein kinase 16 (469 aa).

The Protein kinase domain occupies 15–278 (YNIGRLLGTG…MSEIKMIPWF (264 aa)). ATP contacts are provided by residues 21-29 (LGTGNFAKV) and Lys44. Residue Asp139 is the Proton acceptor of the active site. Residues 157–193 (DFGLSALMMPEGLGGRRGSSDDLLHTRCGTPAYVAPE) are activation loop. Phosphoserine is present on Ser161. Thr182 is subject to Phosphothreonine. The interval 290–320 (IDETIPSPPEPPTKKKKKDLNEKEDDGASPR) is disordered. In terms of domain architecture, NAF spans 317-342 (ASPRSFNAFQFITSMSSGFDLSNLFE). A PPI region spans residues 346-376 (KPKRMFTSKFPAKSVKERLETAAREMDMRVK). The disordered stretch occupies residues 447–469 (DDEDDVTTNDNVDTNDNKINNVS). The segment covering 454-469 (TNDNVDTNDNKINNVS) has biased composition (low complexity).

This sequence belongs to the protein kinase superfamily. CAMK Ser/Thr protein kinase family. SNF1 subfamily. Part of a K(+)-channel calcium-sensing kinase/phosphatase complex composed by a calcium sensor CBL (CBL1, CBL2, CBL3 or CBL9), a kinase CIPK (CIPK6, CIPK16 or CIPK23), a phosphatase PP2C (AIP1) and a K(+)-channel (AKT1). Interacts with AKT1, CBL1, CBL2, CBL3 and CBL9. Requires Mn(2+) as cofactor.

The catalysed reaction is L-seryl-[protein] + ATP = O-phospho-L-seryl-[protein] + ADP + H(+). It carries out the reaction L-threonyl-[protein] + ATP = O-phospho-L-threonyl-[protein] + ADP + H(+). CIPK serine-threonine protein kinases interact with CBL proteins. Binding of a CBL protein to the regulatory NAF domain of CIPK protein lead to the activation of the kinase in a calcium-dependent manner. Downstream of CBL1, CBL2, CBL3 and CBL9, regulates by phosphorylation the K(+) conductance and uptake of AKT1. This Arabidopsis thaliana (Mouse-ear cress) protein is CBL-interacting serine/threonine-protein kinase 16 (CIPK16).